A 213-amino-acid polypeptide reads, in one-letter code: Homeobox protein koza (213 aa).

The interval 24 to 72 is disordered; the sequence is ILSHMGPGSKEKSLGFPKTDQDQDSSLRDTEEKYASEKLQSSSQPAEIH. Positions 32-59 are enriched in basic and acidic residues; the sequence is SKEKSLGFPKTDQDQDSSLRDTEEKYAS. Positions 102–161 form a DNA-binding region, homeobox; it reads QKRSRAAFSHSQVIELERKFSSQKYLSAPERAQLAKSLKLTETQVKIWFQNRRYKTKRKQ.

It belongs to the NK-3 homeobox family. Expressed in the muscle layer of embryonic somites. In tailbud embryos, expressed throughout the entire myotome but at the mid-tailbud stage (stage 32), expression becomes restricted to the outer periphery of the somite so that by the tadpole stage only the outer, type I cells show expression. Also expressed in the dorsal cement gland and in the myocardial layer of the developing heart. In all tissues, expression begins after terminal differentiation.

It is found in the nucleus. May regulate cell proliferation in a tissue-specific manner. In Xenopus laevis (African clawed frog), this protein is Homeobox protein koza.